A 358-amino-acid chain; its full sequence is Putative UDP-kanosamine synthase oxidoreductase subunit (358 aa).

Interacts with RifK.

The catalysed reaction is UDP-alpha-D-glucose + NAD(+) = UDP-3-oxo-alpha-D-glucose + NADH + H(+). It functions in the pathway antibiotic biosynthesis; rifamycin B biosynthesis. Its function is as follows. In a complex with RifK, RifL may catalyze the oxidation of UDP-glucose to UDP-3-keto-D-glucose, which would then be used by RifK to produce UDP-kanosamine. Is not able to use dTDP-glucose as substrate. The protein is Putative UDP-kanosamine synthase oxidoreductase subunit (rifL) of Amycolatopsis mediterranei (strain S699) (Nocardia mediterranei).